The chain runs to 324 residues: MGFLYSQLFKSLPYPTGNYSGKTIVITGSNVGLGKEAARHYVRLGASKMILAVRSLDKGHDAKHDIEGTTKCADNVIEVWKLDMASYDSVQKFAARVVTELPRVDIFIANAGIAPGSYRTAEDNESSITVNVVSTFLLAALVMPKMKSTAATFKTRPTFTITSSDVHGHTTFPQKSAPDGQIIATVNDKATAEKIWDDMYPISKLLEVLGVRSIAEQNPASKFPVTINCVNPGLCHSELGRDFPTIGFWLIKFFLARTTEVGSRTLVHAGSQGEDSHGQYMSDCEIGTPAPFVTSVEGKETQDRVWNELVKKLDAIKPGVTSNF.

4 residues coordinate NADP(+): L33, K58, D83, and N110. S163 functions as the Proton donor in the catalytic mechanism. The NADP(+) site is built by Y200 and K204. The active-site Proton acceptor is Y200. K204 acts as the Lowers pKa of active site Tyr in catalysis.

The protein belongs to the short-chain dehydrogenases/reductases (SDR) family.

Its pathway is secondary metabolite biosynthesis. In terms of biological role, short chain dehydrogenase; part of the gene cluster that mediates the biosynthesis of the dimeric xanthones cryptosporioptides. The pathway begins with the synthesis of atrochrysone thioester by the polyketide synthase dmx-nrPKS. The atrochrysone carboxyl ACP thioesterase dmxR1 then breaks the thioester bond and releases the atrochrysone carboxylic acid from dmx-nrPKS. Atrochrysone carboxylic acid is decarboxylated by the decarboxylase dmxR15, and oxidized by the anthrone oxygenase dmxR16 to yield emodin. Emodin is then reduced to emodin hydroquinone by the oxidoreductase dmxR7. A-ring reduction by the short chain dehydrogenase dmxR18, dehydration by the scytalone dehydratase-like protein dmxR17 and probable spontaneous re-oxidation, results in overall deoxygenation to chrysophanol. Baeyer-Villiger oxidation by the Baeyer-Villiger monooxygenase (BVMO) dmxR6 then yields monodictylactone in equilibrium with monodictyphenone. In the case of the cryptosporioptides biosynthesis, monodictylactone is reduced at C-12 to an alcohol (by the short chain dehydrogenases dmxR12 or dmxR8) and hydroxylated at C-5 by dmxR9, yielding the electron-rich aromatic which could eliminate H(2)O to form the ortho-quinonemethide, followed by tautomerisation to paraquinone and complete the formal reduction to produce the 10-methylgroup. Conjugate addition of C-4a-OH to the resulting paraquinone by the monooxygenase dmxR10 then gives cyclohexadienone, which is then reduced at C-5 by the short chain dehydrogenase dmxR3 to give the dihydroxanthone. The 6,7-epoxide in the cryptosporioptides could be introduced by the cytochrome P450 monooxygenase dmxL3. The highly reducing PKS dmxL2 manufactures butyrate, which is further carboxylated by dmxL1 to form ethylmalonate. It is not yet clear whether the carboxylation occurs while the butyrate is attached to the ACP of dmxL2, but this unusual fungal metabolite could then be esterified to O-5 by the O-acetyltransferase dmxR13. Finally, dimerization performed by dmxR5 gives the observed dimers cryptosporioptides A, B and C as the final products of the pathway. This Cryptosporiopsis sp. (strain 8999) protein is Short chain dehydrogenase/reductase dmxR8.